A 380-amino-acid chain; its full sequence is Tryptophan 2,3-dioxygenase (380 aa).

Substrate-binding positions include 57-61 (FIITH) and R128. H313 is a heme binding site. A substrate-binding site is contributed by T328.

Belongs to the tryptophan 2,3-dioxygenase family. Homotetramer. Dimer of dimers. It depends on heme as a cofactor.

It catalyses the reaction L-tryptophan + O2 = N-formyl-L-kynurenine. The protein operates within amino-acid degradation; L-tryptophan degradation via kynurenine pathway; L-kynurenine from L-tryptophan: step 1/2. Its pathway is pigment biosynthesis; ommochrome biosynthesis. In terms of biological role, heme-dependent dioxygenase that catalyzes the oxidative cleavage of the L-tryptophan (L-Trp) pyrrole ring and converts L-tryptophan to N-formyl-L-kynurenine. Catalyzes the oxidative cleavage of the indole moiety. This Drosophila ananassae (Fruit fly) protein is Tryptophan 2,3-dioxygenase.